A 224-amino-acid chain; its full sequence is Histone H1.03 (224 aa).

2 stretches are compositionally biased toward low complexity: residues 1–22 (MAET…AKAA) and 30–42 (AAGG…PAGP). 2 disordered regions span residues 1–43 (MAET…AGPS) and 99–224 (QTKG…PKKK). The 74-residue stretch at 40–113 (AGPSVTELIT…GASGSFRLSK (74 aa)) folds into the H15 domain. Composition is skewed to basic residues over residues 122 to 137 (APKK…KPAA), 145 to 162 (KKPK…KAKK), 170 to 188 (KAAK…KKAV), and 197 to 224 (KAVK…PKKK).

This sequence belongs to the histone H1/H5 family.

The protein localises to the nucleus. The protein resides in the chromosome. Functionally, histones H1 are necessary for the condensation of nucleosome chains into higher-order structures. In Gallus gallus (Chicken), this protein is Histone H1.03.